The chain runs to 261 residues: Ribosomal RNA small subunit methyltransferase J (261 aa).

Residues 129–130 (ER) and Asp-182 contribute to the S-adenosyl-L-methionine site.

The protein belongs to the methyltransferase superfamily. RsmJ family.

It localises to the cytoplasm. It carries out the reaction guanosine(1516) in 16S rRNA + S-adenosyl-L-methionine = N(2)-methylguanosine(1516) in 16S rRNA + S-adenosyl-L-homocysteine + H(+). Functionally, specifically methylates the guanosine in position 1516 of 16S rRNA. The protein is Ribosomal RNA small subunit methyltransferase J of Desulfotalea psychrophila (strain LSv54 / DSM 12343).